The sequence spans 188 residues: Chitin synthase 1 (188 aa).

It belongs to the chitin synthase family. Class I subfamily.

The protein localises to the cell membrane. The catalysed reaction is [(1-&gt;4)-N-acetyl-beta-D-glucosaminyl](n) + UDP-N-acetyl-alpha-D-glucosamine = [(1-&gt;4)-N-acetyl-beta-D-glucosaminyl](n+1) + UDP + H(+). Its function is as follows. Polymerizes chitin, a structural polymer of the cell wall and septum, by transferring the sugar moiety of UDP-GlcNAc to the non-reducing end of the growing chitin polymer. This chain is Chitin synthase 1 (CHS1), found in Ajellomyces dermatitidis (Blastomyces dermatitidis).